Consider the following 848-residue polypeptide: MTLHCVVALFALISSCLATAGPEPGVQCALSPVNASHPVQALMESFTVLSGCASRGTMGRPQEVHVLNLRAADQGPGQRQSEVTLHLNPISSVHIHHKPVVFLLNSPQPLVWHLKTERLAVGVSRLFLVSEGSVVHFSSGNFSLSAETEERNFPHGNEHLLNWARKEYGAVTSFTELKIARNIYIKVGEDQVFPPTCSIGKNFLSLNYLAEYLQPKPAEGCVVSGRPQEKEVHIIELIAPNSNPYSAFQVDIIIDIRPSRKDPELVKNLILILKCKKSVNWVIKSFDVKGNLKVLAPNSIGFGRESERSMIMTKSVRDDIPSTQEKLLRWALDNGYSPVTSYTVAPVANRFHLRLENNEEMRDEEVHTIPPELQILLDPGALPVLDHPPSGEGAARHGGLPFPFPYIPRRGRQDGGKDRLPRPKDPVVPSIQLLPGPREPQEAQGSRDVALSVRCDSEKMLVAVEKDSFQASGYPGLELTLLDPTCKAKTNGTHFILESPLDGCGTRHRRSAPDGVVYYNSIVIQAPPSGDSSGWPDGYEDLESGDNGFPGDVDEGDVALSSRPELVVFNCSLRPARHPSRAQDPPTRNVTFSMDLYTTDLFLAPAQGVFSVAENGHVYVEVSVTKADQELGFAIQTCFISPYSNPDRMSDYTIIENICPKDESVKFYDPKRVHFPIPQAETDKKRFSFVFKPVFNTSLLFLQCELTLCTKREKEPQKLPKCVLPDEACTSLDASMIWAMMQNKKTFTKPLAVIHHEVQFKGPSTKESNPISPPIFHGLDTLTVMGIAFAAFVIGALLTGALWYIYSHTGDSAGRQPVPTSPPASENSSAAHSLGSTQSTPCSSSSAA.

Residues 1–20 (MTLHCVVALFALISSCLATA) form the signal peptide. Residues 21-784 (GPEPGVQCAL…IFHGLDTLTV (764 aa)) are Extracellular-facing. Asparagine 34 and asparagine 141 each carry an N-linked (GlcNAc...) asparagine glycan. Residues cysteine 52 and cysteine 197 are joined by a disulfide bond. Residues 390–448 (SGEGAARHGGLPFPFPYIPRRGRQDGGKDRLPRPKDPVVPSIQLLPGPREPQEAQGSRD) are disordered. Positions 411-425 (GRQDGGKDRLPRPKD) are enriched in basic and acidic residues. Positions 454–729 (RCDSEKMLVA…PKCVLPDEAC (276 aa)) constitute a ZP domain. The N-linked (GlcNAc...) asparagine glycan is linked to asparagine 491. Serine 529, serine 533, and serine 544 each carry an O-linked (Xyl...) (glycosaminoglycan) serine glycan. N-linked (GlcNAc...) asparagine glycosylation is found at asparagine 570, asparagine 589, and asparagine 696. Intrachain disulfides connect cysteine 638/cysteine 704, cysteine 659/cysteine 729, and cysteine 709/cysteine 722. Positions 736–750 (MIWAMMQNKKTFTKP) are interaction with TGF-beta ligand. The chain crosses the membrane as a helical span at residues 785–806 (MGIAFAAFVIGALLTGALWYIY). At 807-848 (SHTGDSAGRQPVPTSPPASENSSAAHSLGSTQSTPCSSSSAA) the chain is on the cytoplasmic side. Residues 813-848 (AGRQPVPTSPPASENSSAAHSLGSTQSTPCSSSSAA) are disordered. Over residues 833-848 (SLGSTQSTPCSSSSAA) the composition is skewed to low complexity. Residue threonine 837 is modified to Phosphothreonine.

In terms of assembly, forms homodimers and homooligomers. Interacts with DYNLT4. Interacts with integrin ITGA5:ITGB1; this interaction promotes the internalization and trafficking of ITGA5:ITGB1 into endocytic vesicles. Interacts with TGFB1, BMP2, BMP5, BMP7 or GDF5 and inhibin A via the ligand binding domains. Interacts with ALK3/BMPR1A; this interaction results in the cell surface retention of BMPR1A. Interacts with ALK6/BMPR1B; this interaction enhances BMPR1B-mediated stimulation of the BMP signaling pathway. Interacts with the scaffolding protein beta-arrestin2/ARRB2; this interaction mediates internalization of TGFBR3 and thus regulates migration, actin cytoskeleton and activation of CDC42. Post-translationally, extensively modified by glycosaminoglycan groups (GAG). Phosphorylated in the cytoplasmic domain by the type II receptor TGFBR2 at THR-837 to mediate recruitment of ARRB2 and subsequent internalization of TGFBR2 and TGFBR3.

It is found in the cell membrane. Its subcellular location is the secreted. The protein resides in the extracellular space. It localises to the extracellular matrix. Its function is as follows. Cell surface receptor that regulates diverse cellular processes including cell proliferation, differentiation, migration, and apoptosis. Initiates BMP, inhibin, and TGF-beta signaling pathways by interacting with different ligands including TGFB1, BMP2, BMP5, BMP7 or GDF5. Alternatively, acts as a cell surface coreceptor for BMP ligands, serving to enhance ligand binding by differentially regulating BMPR1A/ALK3 and BMPR1B/ALK6 receptor trafficking. Promotes epithelial cell adhesion, focal adhesion formation and integrin signaling during epithelial cell spreading on fibronectin. By interacting with the scaffolding protein beta-arrestin2/ARRB2, regulates migration or actin cytoskeleton and promotes the activation of CDC42 as well as the inhibition of NF-kappa-B. In gonadotrope cells, acts as an inhibin A coreceptor and regulates follicle-stimulating hormone (FSH) levels and female fertility. Plays a role in the inhibition of directed and random cell migration in epithelial cells by altering the actin cytoskeletal organization. Participates in epithelial-mesenchymal transformation (EMT) upon binding to BMP2 or TGFB2, by activating the PAR6/SMURF1/RHOA pathway. This Sus scrofa (Pig) protein is Transforming growth factor beta receptor type 3 (TGFBR3).